We begin with the raw amino-acid sequence, 78 residues long: Large ribosomal subunit protein bL28 (78 aa).

The tract at residues 1 to 21 is disordered; sequence MSRVCQVTGKRPMSGNNRSHA.

This sequence belongs to the bacterial ribosomal protein bL28 family.

This is Large ribosomal subunit protein bL28 from Photorhabdus laumondii subsp. laumondii (strain DSM 15139 / CIP 105565 / TT01) (Photorhabdus luminescens subsp. laumondii).